Reading from the N-terminus, the 219-residue chain is Ribose-5-phosphate isomerase A (219 aa).

Substrate contacts are provided by residues 28 to 31, 81 to 84, and 94 to 97; these read TGST, DGAD, and KGGG. Residue Glu103 is the Proton acceptor of the active site. Substrate is bound at residue Lys121.

The protein belongs to the ribose 5-phosphate isomerase family. In terms of assembly, homodimer.

The catalysed reaction is aldehydo-D-ribose 5-phosphate = D-ribulose 5-phosphate. The protein operates within carbohydrate degradation; pentose phosphate pathway; D-ribose 5-phosphate from D-ribulose 5-phosphate (non-oxidative stage): step 1/1. Its function is as follows. Catalyzes the reversible conversion of ribose-5-phosphate to ribulose 5-phosphate. This Shewanella sp. (strain MR-4) protein is Ribose-5-phosphate isomerase A.